A 966-amino-acid chain; its full sequence is Alanine--tRNA ligase (966 aa).

Residues H646, H650, C750, and H754 each contribute to the Zn(2+) site. A disordered region spans residues 927–949 (DRLGGGGGGRPSLASAGGRDPEA).

Belongs to the class-II aminoacyl-tRNA synthetase family. Requires Zn(2+) as cofactor.

The protein localises to the cytoplasm. It catalyses the reaction tRNA(Ala) + L-alanine + ATP = L-alanyl-tRNA(Ala) + AMP + diphosphate. Catalyzes the attachment of alanine to tRNA(Ala) in a two-step reaction: alanine is first activated by ATP to form Ala-AMP and then transferred to the acceptor end of tRNA(Ala). Also edits incorrectly charged Ser-tRNA(Ala) and Gly-tRNA(Ala) via its editing domain. This is Alanine--tRNA ligase from Salinibacter ruber (strain DSM 13855 / M31).